We begin with the raw amino-acid sequence, 416 residues long: Adenylosuccinate synthetase (416 aa).

GTP contacts are provided by residues 13–19 and 41–43; these read GDEGKGK and GHT. The active-site Proton acceptor is aspartate 14. The Mg(2+) site is built by aspartate 14 and glycine 41. Residues 14–17, 39–42, threonine 126, arginine 140, glutamine 220, threonine 235, and arginine 299 each bind IMP; these read DEGK and NAGH. The active-site Proton donor is histidine 42. Substrate is bound at residue 295 to 301; that stretch reads VSTGRKR. GTP contacts are provided by residues arginine 301, 327–329, and 405–407; these read KLD and STS.

This sequence belongs to the adenylosuccinate synthetase family. Homodimer. Requires Mg(2+) as cofactor.

Its subcellular location is the cytoplasm. It carries out the reaction IMP + L-aspartate + GTP = N(6)-(1,2-dicarboxyethyl)-AMP + GDP + phosphate + 2 H(+). It participates in purine metabolism; AMP biosynthesis via de novo pathway; AMP from IMP: step 1/2. Functionally, plays an important role in the de novo pathway of purine nucleotide biosynthesis. Catalyzes the first committed step in the biosynthesis of AMP from IMP. The chain is Adenylosuccinate synthetase from Campylobacter lari (strain RM2100 / D67 / ATCC BAA-1060).